The following is a 162-amino-acid chain: Selenoprotein F (162 aa).

The N-terminal stretch at 1–28 (MAAGQGGWLRPALGLRLLLATAFQAVSA) is a signal peptide. Residue U93 is a non-standard amino acid, selenocysteine.

The protein belongs to the selenoprotein M/F family. In terms of assembly, forms a tight complex with UGGT1/UGCGL1. Interacts with UGGT2/UGCGL2. Interacts with RDH11.

The protein resides in the endoplasmic reticulum lumen. In terms of biological role, may be involved in redox reactions associated with the formation of disulfide bonds. May contribute to the quality control of protein folding in the endoplasmic reticulum. May regulate protein folding by enhancing the catalytic activity of UGGT1/UGCGL1 and UGGT2/UGCGL2. The chain is Selenoprotein F from Mus musculus (Mouse).